The chain runs to 41 residues: Large ribosomal subunit protein bL36 (41 aa).

It belongs to the bacterial ribosomal protein bL36 family.

This Opitutus terrae (strain DSM 11246 / JCM 15787 / PB90-1) protein is Large ribosomal subunit protein bL36.